Here is a 702-residue protein sequence, read N- to C-terminus: MKLILSTLIVFIHTLLVSALPTKEGSDPNSAKKYLVSDLPGLHENITPDNSIPLMFAGQLEIYPETDTHYFFWKFSDSNPETVTNRTIFWLNGGPGCSSMDGALLETGPFRINSQQQVISNNGSWHKMGDIIYVDQPAGTGFSYSDTYITDLDQVAEYFLKFMEKYYELFPEEIGYEIYFAGESYAGQYIPYIADAILQRNKKLVDGEHKYDLRGVLIGNGWVSPNEQSLSYLPFFKDHGLIDVHHPKWATLLAKHEQCQKIVNKIDSTFDDGVVHYYEVSSSTCEAILTDLLEYTQDTASEKDQRCVNMYDYTLRDSYPSCGMNWPYELVNVGPFLRQEKVMHQLNLINLKKWNECNGRVGRTFQARHSIPAVHLLPELAKEIPVMLFNGANDIICNSQGVLSYLQKLQWNGETGFTNKDNQISWIYDNKEVGYIIWERNISFINIYNSSHMVPYDLPDVSRALIDLITGKYDEKDVDGKKSFVTYPLGSRKESDASADGEENAGSDKVPGDSPSQTIDPMISSSTASSSSVESSLSSSTASADSDSTSSKFTRLIQLAVILVIFWGVYVLYASYKSRPSSIIKKPTNNTSNVTRSSAGKKKNVQWADQLNQFEDDERTQEPNQGIIAKAIGKITGSKDTRGRYAPVQRGNGNEYIDDIELGEGLSDPNVDEFIIGSDDDEEQGQAHSGAATHNQKQKPMN.

Residues 1-19 (MKLILSTLIVFIHTLLVSA) form the signal peptide. Topologically, residues 20-555 (LPTKEGSDPN…SDSTSSKFTR (536 aa)) are lumenal. Asparagine 85 and asparagine 122 each carry an N-linked (GlcNAc...) asparagine glycan. Catalysis depends on residues serine 184 and aspartate 394. Asparagine 441 and asparagine 449 each carry an N-linked (GlcNAc...) asparagine glycan. Residue histidine 452 is part of the active site. A disordered region spans residues 491–548 (SRKESDASADGEENAGSDKVPGDSPSQTIDPMISSSTASSSSVESSLSSSTASADSDS). Positions 524-548 (SSSTASSSSVESSLSSSTASADSDS) are enriched in low complexity. Residues 556-576 (LIQLAVILVIFWGVYVLYASY) traverse the membrane as a helical segment. Over 577–702 (KSRPSSIIKK…THNQKQKPMN (126 aa)) the chain is Cytoplasmic. Disordered regions lie at residues 582-603 (SIIK…GKKK) and 660-702 (IELG…KPMN). 2 stretches are compositionally biased toward polar residues: residues 587-598 (PTNNTSNVTRSS) and 692-702 (ATHNQKQKPMN).

This sequence belongs to the peptidase S10 family.

The protein resides in the golgi apparatus. The protein localises to the trans-Golgi network membrane. The enzyme catalyses Preferential release of a C-terminal arginine or lysine residue.. Protease with a carboxypeptidase B-like function involved in the C-terminal processing of the lysine and arginine residues from protein precursors. Promotes cell fusion and is involved in the programmed cell death. In Candida albicans (strain SC5314 / ATCC MYA-2876) (Yeast), this protein is Pheromone-processing carboxypeptidase KEX1 (KEX1).